The primary structure comprises 166 residues: uncharacterized protein (166 aa).

Residues 2-82 (DNWVCYLIMS…KRLSKKRNIQ (81 aa)) form the GIY-YIG domain. Positions 23–43 (NNRQRRLNDHNNLNPSRKGAK) are disordered.

This is an uncharacterized protein from Acanthamoeba polyphaga mimivirus (APMV).